Reading from the N-terminus, the 254-residue chain is Ribonuclease HII (254 aa).

An RNase H type-2 domain is found at 70–254 (QAIAGIDEVG…TFEPIKSMYE (185 aa)). 3 residues coordinate a divalent metal cation: D76, E77, and D168.

This sequence belongs to the RNase HII family. Mn(2+) is required as a cofactor. Mg(2+) serves as cofactor.

The protein resides in the cytoplasm. It catalyses the reaction Endonucleolytic cleavage to 5'-phosphomonoester.. Functionally, endonuclease that specifically degrades the RNA of RNA-DNA hybrids. The protein is Ribonuclease HII of Streptococcus sanguinis (strain SK36).